Reading from the N-terminus, the 1661-residue chain is ATP-dependent bile acid permease (1661 aa).

Topologically, residues 1–33 are lumenal; sequence MHHVLNSTRPDHRFWFYDDVTQYGRTKYLNYYT. Asparagine 6 is a glycosylation site (N-linked (GlcNAc...) asparagine). The helical transmembrane segment at 34 to 54 threads the bilayer; sequence PLVLLIFTVLFITYNIWKHYY. Residues 55–74 are Cytoplasmic-facing; that stretch reads YYDVLHLKQKNPIDELLYSS. Residues 75-95 traverse the membrane as a helical segment; that stretch reads TDEDEQSPLINNNTITTNYVD. Topologically, residues 96–133 are lumenal; the sequence is NNCTKDALKNRHFSLEKLKSVKVNGEPHGTPEIVRRGF. Residue asparagine 97 is glycosylated (N-linked (GlcNAc...) asparagine). Residues 134-154 form a helical membrane-spanning segment; sequence IEKSRIILEFFLVLSQVIIHS. Over 155-166 the chain is Cytoplasmic; the sequence is FILLHYVNKNPE. A helical membrane pass occupies residues 167–187; that stretch reads FTQQGTITGLVEWCALFIIVS. The Lumenal segment spans residues 188-205; that stretch reads LRLANVNQNFKFINKYPG. The helical transmembrane segment at 206 to 226 threads the bilayer; the sequence is NLWSVSFINYLALFISMILPF. Topologically, residues 227–345 are cytoplasmic; sequence RSIFIHHINS…VKRKRIFSLN (119 aa). The helical transmembrane segment at 346–366 threads the bilayer; that stretch reads LFFFFSNYLVLQCFWAFLGSV. Residues 354 to 662 form the ABC transmembrane type-1 1 domain; sequence LVLQCFWAFL…LSDMLSFVVQ (309 aa). Over 367–393 the chain is Lumenal; it reads LSFIPTVLLKRILEYVEDQSSAPSNLA. The helical transmembrane segment at 394–414 threads the bilayer; it reads WFYVTVMFVGRILVAICQAQA. The Cytoplasmic portion of the chain corresponds to 415–495; it reads LFFGRRVCIR…AFKVSEICGY (81 aa). The segment at 445–468 is disordered; sequence NKTKPSNEDPQEINDQKSINGDEE. A helical transmembrane segment spans residues 496–516; it reads LHSFLEAFVMTVVALALLYRL. Residues 517–519 lie on the Lumenal side of the membrane; sequence LGF. A helical membrane pass occupies residues 520–540; sequence AAIVGVLIIVAMLPLNYKLAK. At 541–602 the chain is on the cytoplasmic side; the sequence is YIGDLQKKNL…LLLMRSIVWS (62 aa). The helical transmembrane segment at 603 to 623 threads the bilayer; the sequence is ISSFLWFVTPTIVTAASFAYY. At 624 to 644 the chain is on the lumenal side; that stretch reads IYVQGEVLTTPVAFTALSLFT. A helical membrane pass occupies residues 645 to 665; it reads LLRDPLDRLSDMLSFVVQSKV. The Cytoplasmic portion of the chain corresponds to 666 to 1053; sequence SLDRVQDFLN…SWWVRAWASH (388 aa). One can recognise an ABC transporter 1 domain in the interval 694–935; it reads FAFENSTISW…GLFGEDELVK (242 aa). An ATP-binding site is contributed by 729-736; that stretch reads GPTGSGKT. Serine 936, serine 940, and serine 955 each carry phosphoserine. The ABC transmembrane type-1 2 domain occupies 1026-1345; it reads VSFLASLFLI…LVRLYSEVEM (320 aa). A helical transmembrane segment spans residues 1054–1074; that stretch reads NVIAKIIPRAQRAIAFISKKA. Residues 1075–1114 lie on the Lumenal side of the membrane; sequence SHLIDWRGSSQISMASAENQPSSGHSTMYYLVLYLIIGFA. A helical membrane pass occupies residues 1115-1135; that stretch reads QALLGAGKTILNFVAGINASR. The Cytoplasmic portion of the chain corresponds to 1136–1178; that stretch reads KIFNMILNKVLHSKIRFFDATPTGRIMNRFSKDIEAIDQELTP. The helical transmembrane segment at 1179–1199 threads the bilayer; it reads YIQGAFYSLIECLSTVILITF. Position 1200 (isoleucine 1200) is a topological domain, lumenal. The chain crosses the membrane as a helical span at residues 1201–1221; that stretch reads TPQFLSVAIVVSILYYFVGYF. At 1222–1292 the chain is on the cytoplasmic side; it reads YMAGSRELKR…VANRWLAFRI (71 aa). The helical transmembrane segment at 1293–1313 threads the bilayer; it reads DMIGSLVIFGAGLFILFNINN. Residues 1314–1315 are Lumenal-facing; it reads LD. The helical transmembrane segment at 1316-1336 threads the bilayer; it reads SGMAGISLTYAISFTEGALWL. Residues 1337 to 1661 are Cytoplasmic-facing; the sequence is VRLYSEVEMN…FVEKLNSKKD (325 aa). Residues 1381-1636 enclose the ABC transporter 2 domain; the sequence is IEVNDLSLRY…KQSAFYSMCE (256 aa). 1415 to 1422 serves as a coordination point for ATP; the sequence is GRTGAGKS.

The protein belongs to the ABC transporter superfamily. ABCC family. Conjugate transporter (TC 3.A.1.208) subfamily.

It is found in the vacuole membrane. In terms of biological role, vacuolar class C ABC transporter which regulates the translocation of phosphatidylcholine to the vacuole lumen, the release of lumenal calcium stores, and acts as a negative regulator of vacuole fusion. Exhibits ATP-dependent bile acid transport. The protein is ATP-dependent bile acid permease (YBT1) of Saccharomyces cerevisiae (strain ATCC 204508 / S288c) (Baker's yeast).